A 402-amino-acid chain; its full sequence is D-mannonate dehydratase (402 aa).

2 residues coordinate substrate: asparagine 37 and histidine 122. Tyrosine 159 (proton donor/acceptor) is an active-site residue. A Mg(2+)-binding site is contributed by aspartate 210. Residue histidine 212 is the Proton donor/acceptor of the active site. Mg(2+) contacts are provided by glutamate 236 and glutamate 262. Residues glutamate 262, arginine 283, histidine 312, aspartate 316, and glutamate 339 each coordinate substrate.

Belongs to the mandelate racemase/muconate lactonizing enzyme family. GalD subfamily. Mg(2+) is required as a cofactor.

The catalysed reaction is D-mannonate = 2-dehydro-3-deoxy-D-gluconate + H2O. Its pathway is carbohydrate metabolism; pentose and glucuronate interconversion. Catalyzes the dehydration of D-mannonate. Has no detectable activity with a panel of 70 other acid sugars (in vitro). The chain is D-mannonate dehydratase from Rhizorhabdus wittichii (strain DSM 6014 / CCUG 31198 / JCM 15750 / NBRC 105917 / EY 4224 / RW1) (Sphingomonas wittichii).